The sequence spans 117 residues: Large ribosomal subunit protein bL20c (117 aa).

The protein belongs to the bacterial ribosomal protein bL20 family.

The protein resides in the plastid. Its subcellular location is the chloroplast. In terms of biological role, binds directly to 23S ribosomal RNA and is necessary for the in vitro assembly process of the 50S ribosomal subunit. It is not involved in the protein synthesizing functions of that subunit. The protein is Large ribosomal subunit protein bL20c of Aethionema grandiflorum (Persian stone-cress).